Here is a 113-residue protein sequence, read N- to C-terminus: Death-associated protein-like 1.S (113 aa).

The segment at 1-53 (MTKELKVQSSPQALKAGHLPAVKAGGMRVSKKQGNDENSAPEKNAKKTLQEKP) is disordered.

It belongs to the DAP-DAPL1 family. As to quaternary structure, associates with ribosomes; preventing translation. Interacts with eiF5a (eif5a and eif5a2); preventing translation.

Its function is as follows. Ribosome-binding protein that promotes ribosome hibernation, a process during which ribosomes are stabilized in an inactive state and preserved from proteasomal degradation. Acts via its association with eiF5a (eif5a and eif5a2) at the polypeptide exit tunnel of the ribosome, preventing mRNA translation. Plays a key role in ribosome hibernation in the mature egg by preventing mRNA translation, leading to ribosome inactivation. Ribosomes, which are produced in large quantities during oogenesis, are stored and translationally repressed in the egg and early embryo. This chain is Death-associated protein-like 1.S (dapl1.S), found in Xenopus laevis (African clawed frog).